The sequence spans 490 residues: Tegument protein VP16 (490 aa).

Positions 11 to 35 are disordered; that stretch reads DADGVSPPPPRPAGGPKNTPAAPPL. Serine 16, serine 351, serine 411, and serine 453 each carry phosphoserine. The transcriptional activation stretch occupies residues 411–490; the sequence is STTAPITDVS…DAMGIDDFGG (80 aa).

It belongs to the herpesviridae tegument protein VP16 protein family. Interacts with VP22. Interacts with gH (via C-terminus). Interacts with the virion host shutoff protein (vhs). Interacts with VP11/12. Associates with the VP16-induced complex; binding to host HCFC1 activates VP16 for association with the octamer motif-binding host protein POU2F1, to form a multiprotein-DNA complex responsible for activating transcription of the viral immediate early genes.

It is found in the virion tegument. The protein localises to the host nucleus. Transcriptional activator of immediate-early (IE) gene products (alpha genes). Acts as a key activator of lytic infection by initiating the lytic program through the assembly of the transcriptional regulatory VP16-induced complex composed of VP16 and two cellular factors, HCFC1 and POU2F 1. VP16-induced complex represents a regulatory switch: when it is on, it promotes IE-gene expression and thus lytic infection, and when it is off, it limits IE-gene transcription favoring latent infection. Its function is as follows. May play a role in the aggregation of tegument proteins around nucleocapsids during virus morphogenesis. The polypeptide is Tegument protein VP16 (Human herpesvirus 2 (strain 333) (HHV-2)).